The chain runs to 336 residues: MIQKNWQELIKPNKVEFSSSSRTRATLVAEPLERGFGLTLGNALRRVLLSSLRGAAVTAVQIDGVLHEFSSIPGVREDVTDIVLNIKEIAIKMDGDDAKRMVVRKQGPGVVTAGDIQTVGDIEILNPEHVICTLDEGAEIRMEFTVNNGKGYVPAERNRAEDAPIGLIPVDSLYSPVKKVSYKVENTREGQVLDYDKLNMTIETDGSITGEDAVAFAARILQDQLGVFVNFDEPQKETEEEAVTELAFNPALLKKVDELELSVRSANCLKNDNIVYIGDLIQKTEAEMLRTPNFGRKSLNEIKEVLASMGLHLGMEVPAWPPENIEDLAKRYEDQY.

Residues 1 to 232 (MIQKNWQELI…DQLGVFVNFD (232 aa)) are alpha N-terminal domain (alpha-NTD). The alpha C-terminal domain (alpha-CTD) stretch occupies residues 248–336 (FNPALLKKVD…DLAKRYEDQY (89 aa)).

This sequence belongs to the RNA polymerase alpha chain family. Homodimer. The RNAP catalytic core consists of 2 alpha, 1 beta, 1 beta' and 1 omega subunit. When a sigma factor is associated with the core the holoenzyme is formed, which can initiate transcription.

The catalysed reaction is RNA(n) + a ribonucleoside 5'-triphosphate = RNA(n+1) + diphosphate. Its function is as follows. DNA-dependent RNA polymerase catalyzes the transcription of DNA into RNA using the four ribonucleoside triphosphates as substrates. The polypeptide is DNA-directed RNA polymerase subunit alpha (Rhizobium etli (strain CIAT 652)).